Consider the following 74-residue polypeptide: MKKSFFEYLMTQRNPQPNNEVEEFANQAFFDQVFPKQSRDFDEISKYLELNAGYLQSMSIFDSAWQRYLESEQF.

This sequence belongs to the UPF0346 family.

The chain is UPF0346 protein PEPE_1063 from Pediococcus pentosaceus (strain ATCC 25745 / CCUG 21536 / LMG 10740 / 183-1w).